The following is a 140-amino-acid chain: Cell division protein SepF (140 aa).

Residues 15-47 form a disordered region; sequence DSQYEEPTEASQAAAPTESATNTRSTPKVVPMQ.

This sequence belongs to the SepF family. Homodimer. Interacts with FtsZ.

The protein localises to the cytoplasm. Cell division protein that is part of the divisome complex and is recruited early to the Z-ring. Probably stimulates Z-ring formation, perhaps through the cross-linking of FtsZ protofilaments. Its function overlaps with FtsA. This is Cell division protein SepF from Lactiplantibacillus plantarum (strain ATCC BAA-793 / NCIMB 8826 / WCFS1) (Lactobacillus plantarum).